The primary structure comprises 947 residues: Protein translocase subunit SecA (947 aa).

ATP contacts are provided by residues glutamine 85, glycine 103–threonine 107, and aspartate 514. The interval alanine 864–lysine 947 is disordered. Residues proline 884–histidine 900 are compositionally biased toward basic and acidic residues. Residues glutamate 934–lysine 947 show a composition bias toward basic residues.

Belongs to the SecA family. Monomer and homodimer. Part of the essential Sec protein translocation apparatus which comprises SecA, SecYEG and auxiliary proteins SecDF. Other proteins may also be involved.

Its subcellular location is the cell membrane. It is found in the cytoplasm. The enzyme catalyses ATP + H2O + cellular proteinSide 1 = ADP + phosphate + cellular proteinSide 2.. Functionally, part of the Sec protein translocase complex. Interacts with the SecYEG preprotein conducting channel. Has a central role in coupling the hydrolysis of ATP to the transfer of proteins into and across the cell membrane, serving as an ATP-driven molecular motor driving the stepwise translocation of polypeptide chains across the membrane. This Streptomyces lividans protein is Protein translocase subunit SecA.